The following is a 123-amino-acid chain: Large ribosomal subunit protein bL19c (123 aa).

It belongs to the bacterial ribosomal protein bL19 family.

The protein localises to the plastid. Its subcellular location is the chloroplast. This chain is Large ribosomal subunit protein bL19c, found in Pyropia yezoensis (Susabi-nori).